The sequence spans 343 residues: GTP 3',8-cyclase (343 aa).

The Radical SAM core domain maps to P19–P244. Position 28 (R28) interacts with GTP. Residues C35 and C39 each coordinate [4Fe-4S] cluster. Position 41 (Y41) interacts with S-adenosyl-L-methionine. C42 contributes to the [4Fe-4S] cluster binding site. Position 77 (R77) interacts with GTP. Residue G81 participates in S-adenosyl-L-methionine binding. T111 provides a ligand contact to GTP. S135 serves as a coordination point for S-adenosyl-L-methionine. K171 lines the GTP pocket. Position 205 (M205) interacts with S-adenosyl-L-methionine. The [4Fe-4S] cluster site is built by C268 and C271. A GTP-binding site is contributed by R273 to R275. C285 is a [4Fe-4S] cluster binding site.

It belongs to the radical SAM superfamily. MoaA family. In terms of assembly, monomer and homodimer. It depends on [4Fe-4S] cluster as a cofactor.

The enzyme catalyses GTP + AH2 + S-adenosyl-L-methionine = (8S)-3',8-cyclo-7,8-dihydroguanosine 5'-triphosphate + 5'-deoxyadenosine + L-methionine + A + H(+). It functions in the pathway cofactor biosynthesis; molybdopterin biosynthesis. Its function is as follows. Catalyzes the cyclization of GTP to (8S)-3',8-cyclo-7,8-dihydroguanosine 5'-triphosphate. The sequence is that of GTP 3',8-cyclase from Nitrobacter hamburgensis (strain DSM 10229 / NCIMB 13809 / X14).